Consider the following 118-residue polypeptide: Protein YLR162W (118 aa).

Polar residues predominate over residues 1 to 20; the sequence is MQHTLTRTASLPERSSSAHS. The segment at 1 to 26 is disordered; that stretch reads MQHTLTRTASLPERSSSAHSAATALP. A helical membrane pass occupies residues 38 to 58; that stretch reads LVPLLCIFWFVFVSMSPLPPA.

The protein resides in the membrane. Overexpression confers resistance to the antimicrobial peptide MiAMP1. In Saccharomyces cerevisiae (strain ATCC 204508 / S288c) (Baker's yeast), this protein is Protein YLR162W.